The following is an 85-amino-acid chain: Cell division topological specificity factor (85 aa).

The protein belongs to the MinE family.

In terms of biological role, prevents the cell division inhibition by proteins MinC and MinD at internal division sites while permitting inhibition at polar sites. This ensures cell division at the proper site by restricting the formation of a division septum at the midpoint of the long axis of the cell. The polypeptide is Cell division topological specificity factor (Shewanella oneidensis (strain ATCC 700550 / JCM 31522 / CIP 106686 / LMG 19005 / NCIMB 14063 / MR-1)).